The sequence spans 310 residues: Tryptophan 2,3-dioxygenase (310 aa).

The interval 1–36 (MQPPGEDAPAGCPFSGARAAHSAPAAPAAHEASHVP) is disordered. Low complexity predominate over residues 15–36 (SGARAAHSAPAAPAAHEASHVP). Residues 79–83 (FIIQH), tyrosine 141, and arginine 145 contribute to the substrate site. Heme is bound at residue histidine 268. Threonine 282 contacts substrate.

The protein belongs to the tryptophan 2,3-dioxygenase family. In terms of assembly, homotetramer. Heme serves as cofactor.

It carries out the reaction L-tryptophan + O2 = N-formyl-L-kynurenine. It participates in amino-acid degradation; L-tryptophan degradation via kynurenine pathway; L-kynurenine from L-tryptophan: step 1/2. Its function is as follows. Heme-dependent dioxygenase that catalyzes the oxidative cleavage of the L-tryptophan (L-Trp) pyrrole ring and converts L-tryptophan to N-formyl-L-kynurenine. Catalyzes the oxidative cleavage of the indole moiety. This chain is Tryptophan 2,3-dioxygenase, found in Burkholderia lata (strain ATCC 17760 / DSM 23089 / LMG 22485 / NCIMB 9086 / R18194 / 383).